A 346-amino-acid chain; its full sequence is MNKKRVLTGDRPTGKLHLGHWIGSIMNRLQLQNDPRYDCFFIIADLHTLTTKTRKEEVLHIDSHIYDVLADWLSVGIDPEKSAIYLQSAIPEIYELNLLFSMLTPLNHIMGIPSIKEMARNASINEESLSHGLIGYPVLQSADILLAKAHLVPVGKDNEAHVELTRDIAKTFNRLYGSVFPEPDILQGELTSLVGTNGQGKMSKSANNAIYLSDDEKTVQEKIRKMYTDPNRVHATTPGRVEGNPLFIYHDLFNPHKEEVEEFKTRYRQGCIKDVEVKARLAEEINLFLNPFREKRSEFVAQPKILEEALQKGTEKMRSVARETMEEVHNNLGLSRKWRSILASSK.

Residues 11–13 (RPT) and 19–20 (GH) contribute to the ATP site. The 'HIGH' region motif lies at 12–20 (PTGKLHLGH). Asp-143 contacts L-tryptophan. ATP-binding positions include 155 to 157 (GKD), Leu-193, and 201 to 205 (KMSKS). A 'KMSKS' region motif is present at residues 201–205 (KMSKS).

Belongs to the class-I aminoacyl-tRNA synthetase family. In terms of assembly, homodimer.

It localises to the cytoplasm. The enzyme catalyses tRNA(Trp) + L-tryptophan + ATP = L-tryptophyl-tRNA(Trp) + AMP + diphosphate + H(+). Its function is as follows. Catalyzes the attachment of tryptophan to tRNA(Trp). This chain is Tryptophan--tRNA ligase, found in Chlamydia muridarum (strain MoPn / Nigg).